A 247-amino-acid chain; its full sequence is Ubiquinone biosynthesis O-methyltransferase (247 aa).

S-adenosyl-L-methionine contacts are provided by Arg-40, Gly-71, Asp-92, and Met-135.

Belongs to the methyltransferase superfamily. UbiG/COQ3 family.

It carries out the reaction a 3-demethylubiquinol + S-adenosyl-L-methionine = a ubiquinol + S-adenosyl-L-homocysteine + H(+). It catalyses the reaction a 3-(all-trans-polyprenyl)benzene-1,2-diol + S-adenosyl-L-methionine = a 2-methoxy-6-(all-trans-polyprenyl)phenol + S-adenosyl-L-homocysteine + H(+). The protein operates within cofactor biosynthesis; ubiquinone biosynthesis. In terms of biological role, O-methyltransferase that catalyzes the 2 O-methylation steps in the ubiquinone biosynthetic pathway. This chain is Ubiquinone biosynthesis O-methyltransferase, found in Ruegeria sp. (strain TM1040) (Silicibacter sp.).